A 251-amino-acid polypeptide reads, in one-letter code: HTH-type transcriptional regulator IolR (251 aa).

One can recognise an HTH deoR-type domain in the interval 1 to 57 (MKLMRIQEMEEYILSHGTVSLDELCQVFNVSKNTVRRDINKLTEKGAIEKVYGGVTS). Residues 19–38 (VSLDELCQVFNVSKNTVRRD) constitute a DNA-binding region (H-T-H motif).

Its function is as follows. Iol operon repressor. This chain is HTH-type transcriptional regulator IolR (iolR), found in Bacillus subtilis (strain 168).